The chain runs to 101 residues: Small ribosomal subunit protein uS14A (101 aa).

Belongs to the universal ribosomal protein uS14 family. Part of the 30S ribosomal subunit. Contacts proteins S3 and S10.

In terms of biological role, binds 16S rRNA, required for the assembly of 30S particles and may also be responsible for determining the conformation of the 16S rRNA at the A site. In Salinispora arenicola (strain CNS-205), this protein is Small ribosomal subunit protein uS14A.